A 209-amino-acid polypeptide reads, in one-letter code: Small ribosomal subunit protein uS3 (209 aa).

The 70-residue stretch at 38–107 (IRNFIKKNYN…KFGIDIIELK (70 aa)) folds into the KH type-2 domain.

Belongs to the universal ribosomal protein uS3 family. In terms of assembly, part of the 30S ribosomal subunit. Forms a tight complex with proteins S10 and S14.

Functionally, binds the lower part of the 30S subunit head. Binds mRNA in the 70S ribosome, positioning it for translation. The sequence is that of Small ribosomal subunit protein uS3 from Fervidobacterium nodosum (strain ATCC 35602 / DSM 5306 / Rt17-B1).